A 180-amino-acid polypeptide reads, in one-letter code: Large ribosomal subunit protein uL6 (180 aa).

This sequence belongs to the universal ribosomal protein uL6 family. In terms of assembly, part of the 50S ribosomal subunit.

In terms of biological role, this protein binds to the 23S rRNA, and is important in its secondary structure. It is located near the subunit interface in the base of the L7/L12 stalk, and near the tRNA binding site of the peptidyltransferase center. In Thermoanaerobacter sp. (strain X514), this protein is Large ribosomal subunit protein uL6.